The chain runs to 299 residues: Taste receptor type 2 member 19 (299 aa).

Residue methionine 1 is a topological domain, extracellular. A helical transmembrane segment spans residues 2–22 (MCFLLIILSILVVFAFVLGNF). Residues 23–55 (SNGFIALVNVIDWVNTRKISSADQILTALVVSR) lie on the Cytoplasmic side of the membrane. Residues 56 to 76 (IGLLWVMLFLWYATVFNSALY) traverse the membrane as a helical segment. The Extracellular segment spans residues 77-87 (GLEVRIVASNA). Residues 88–108 (WAVMNHFSIWLAASLSIFCLL) form a helical membrane-spanning segment. Over 109–127 (KIANFSNLIFLHLKKRIKS) the chain is Cytoplasmic. A helical transmembrane segment spans residues 128–148 (VVLVILLGPLVFLICNLAVIT). The Extracellular segment spans residues 149 to 181 (MDERVWTKEYEGNVTWKIKLRNAIQLSSLTVTT). Asparagine 161 carries an N-linked (GlcNAc...) asparagine glycan. A helical membrane pass occupies residues 182–202 (LANLIPFTLSLICFLLLICSL). Residues 203–226 (CKHLKKMRLHSKGSQDPSTKVHIK) lie on the Cytoplasmic side of the membrane. The helical transmembrane segment at 227–247 (ALQTVTSFLMLFAIYFLCIIT) threads the bilayer. Topologically, residues 248-259 (STWNLRTQQSKL) are extracellular. The helical transmembrane segment at 260-280 (VLLLCQTVAIMYPSFHSFILI) threads the bilayer. Residues 281 to 299 (MGSRKLKQTFLSVLWQMTR) lie on the Cytoplasmic side of the membrane.

Belongs to the G-protein coupled receptor T2R family.

Its subcellular location is the membrane. Its function is as follows. Receptor that may play a role in the perception of bitterness and is gustducin-linked. May play a role in sensing the chemical composition of the gastrointestinal content. The activity of this receptor may stimulate alpha gustducin, mediate PLC-beta-2 activation and lead to the gating of TRPM5. In Pan paniscus (Pygmy chimpanzee), this protein is Taste receptor type 2 member 19 (TAS2R19).